Reading from the N-terminus, the 292-residue chain is Ornithine decarboxylase antizyme (292 aa).

The protein belongs to the ODC antizyme family. In terms of assembly, interacts with ODC/SPE1 and thereby sterically blocks ODC homodimerization.

Its function is as follows. Ornithine decarboxylase (ODC) antizyme protein that negatively regulates ODC activity and intracellular polyamine biosynthesis in response to increased intracellular polyamine levels. Binds to ODC/SPE1 monomers, inhibiting the assembly of the functional ODC homodimer, and targets the monomers for ubiquitin-independent proteolytic destruction by the 26S proteasome. This is Ornithine decarboxylase antizyme (OAZ1) from Saccharomyces cerevisiae (strain ATCC 204508 / S288c) (Baker's yeast).